Consider the following 513-residue polypeptide: Light-independent protochlorophyllide reductase subunit B (513 aa).

Asp-36 is a binding site for [4Fe-4S] cluster. Asp-299 acts as the Proton donor in catalysis. 434–435 (GM) provides a ligand contact to substrate.

It belongs to the ChlB/BchB/BchZ family. In terms of assembly, protochlorophyllide reductase is composed of three subunits; ChlL, ChlN and ChlB. Forms a heterotetramer of two ChlB and two ChlN subunits. Requires [4Fe-4S] cluster as cofactor.

It is found in the plastid. The protein localises to the chloroplast. The catalysed reaction is chlorophyllide a + oxidized 2[4Fe-4S]-[ferredoxin] + 2 ADP + 2 phosphate = protochlorophyllide a + reduced 2[4Fe-4S]-[ferredoxin] + 2 ATP + 2 H2O. Its pathway is porphyrin-containing compound metabolism; chlorophyll biosynthesis (light-independent). Functionally, component of the dark-operative protochlorophyllide reductase (DPOR) that uses Mg-ATP and reduced ferredoxin to reduce ring D of protochlorophyllide (Pchlide) to form chlorophyllide a (Chlide). This reaction is light-independent. The NB-protein (ChlN-ChlB) is the catalytic component of the complex. The sequence is that of Light-independent protochlorophyllide reductase subunit B from Staurastrum punctulatum (Green alga).